Here is a 547-residue protein sequence, read N- to C-terminus: MAAKDVKFDIDARNRMLKGVNILADAVKVTLGPKGRNVVLDKSFGAPRITKDGVSVAKEIELEDKFENMGAQMVKEVASRTNDEAGDGTTTATVLAQAIVKEGMKSVAAGMNPMDLKRGIDLATSKVVEAIKSAARPVNDSAEVAQVGTISANGESEIGQQIADAMQKVGNEGVITVEENKGLETETDVVEGMQFDRGYLSPYFVTNPDKMTTELEDAIILLHEKKLSSLQPMVPLLESVIQSGKPLLIIAEDVEGEALATLVVNKLRGGLKIAAVKAPGFGDRRKAMLQDIAILTGGQVISEDLGMKLESVTIDMLGSAKRVSITKDETTIVDGAGAKAEIEARVAQIRNQIEETTSDYDREKLQERVAKLAGGVAVIRVGGMTEVEVKERKDRVDDALNATRAAVQEGIVVGGGVALIQAAKHLDGLEGANNDQNIGINIVRKALEAPLRQIAENAGVDGSVVAGKIRESSDLAFGFNAQTEEYGDMFKFGVIDPAKVVRTALQDAASIAGLLITTEAMVADKPAKEGAGAGGGMPDMGGMGGMM.

ATP contacts are provided by residues 30-33 (TLGP), K51, 87-91 (DGTTT), G415, and D496. Positions 528-547 (KEGAGAGGGMPDMGGMGGMM) are disordered. The segment covering 531–547 (AGAGGGMPDMGGMGGMM) has biased composition (gly residues).

Belongs to the chaperonin (HSP60) family. As to quaternary structure, forms a cylinder of 14 subunits composed of two heptameric rings stacked back-to-back. Interacts with the co-chaperonin GroES.

The protein resides in the cytoplasm. It catalyses the reaction ATP + H2O + a folded polypeptide = ADP + phosphate + an unfolded polypeptide.. Functionally, together with its co-chaperonin GroES, plays an essential role in assisting protein folding. The GroEL-GroES system forms a nano-cage that allows encapsulation of the non-native substrate proteins and provides a physical environment optimized to promote and accelerate protein folding. This chain is Chaperonin GroEL, found in Dinoroseobacter shibae (strain DSM 16493 / NCIMB 14021 / DFL 12).